The following is a 137-amino-acid chain: Phosphoribosyl-AMP cyclohydrolase (137 aa).

A Mg(2+)-binding site is contributed by Asp84. Cys85 contacts Zn(2+). Residues Asp86 and Asp88 each coordinate Mg(2+). The Zn(2+) site is built by Cys101 and Cys108.

Belongs to the PRA-CH family. In terms of assembly, homodimer. Mg(2+) is required as a cofactor. Requires Zn(2+) as cofactor.

The protein resides in the cytoplasm. The enzyme catalyses 1-(5-phospho-beta-D-ribosyl)-5'-AMP + H2O = 1-(5-phospho-beta-D-ribosyl)-5-[(5-phospho-beta-D-ribosylamino)methylideneamino]imidazole-4-carboxamide. It participates in amino-acid biosynthesis; L-histidine biosynthesis; L-histidine from 5-phospho-alpha-D-ribose 1-diphosphate: step 3/9. Catalyzes the hydrolysis of the adenine ring of phosphoribosyl-AMP. The polypeptide is Phosphoribosyl-AMP cyclohydrolase (Chlorobium chlorochromatii (strain CaD3)).